The following is a 210-amino-acid chain: MTAWVGLTGGIGSGKSAAAQYFADLRVPRIDADRAAHSLTASDGIALPEIRRLFGDTVFDTQGLLRRDILRKEIFASPSRKALLESVMLPLIFSEIKKQQETFTDAVYGIVEIPLLTEKRQFISLIRRVLTISAPLEKRIGRVMARSGLTRGEVADIISHQASESERLLLADDVLLNDGSLKSLREKTMLLHAFYSGIFASKPTQGKHNG.

In terms of domain architecture, DPCK spans 4-202 (WVGLTGGIGS…AFYSGIFASK (199 aa)). 12 to 17 (GSGKSA) lines the ATP pocket.

This sequence belongs to the CoaE family.

It is found in the cytoplasm. It catalyses the reaction 3'-dephospho-CoA + ATP = ADP + CoA + H(+). It participates in cofactor biosynthesis; coenzyme A biosynthesis; CoA from (R)-pantothenate: step 5/5. Its function is as follows. Catalyzes the phosphorylation of the 3'-hydroxyl group of dephosphocoenzyme A to form coenzyme A. This is Dephospho-CoA kinase from Neisseria gonorrhoeae.